The primary structure comprises 291 residues: Elongation factor Ts (291 aa).

Residues T80–V83 form an involved in Mg(2+) ion dislocation from EF-Tu region.

The protein belongs to the EF-Ts family.

Its subcellular location is the cytoplasm. In terms of biological role, associates with the EF-Tu.GDP complex and induces the exchange of GDP to GTP. It remains bound to the aminoacyl-tRNA.EF-Tu.GTP complex up to the GTP hydrolysis stage on the ribosome. In Acinetobacter baylyi (strain ATCC 33305 / BD413 / ADP1), this protein is Elongation factor Ts.